Reading from the N-terminus, the 311-residue chain is tRNA-cytidine(32) 2-sulfurtransferase (311 aa).

The PP-loop motif motif lies at 47-52 (SGGKDS). [4Fe-4S] cluster contacts are provided by C122, C125, and C213.

The protein belongs to the TtcA family. Homodimer. Requires Mg(2+) as cofactor. [4Fe-4S] cluster serves as cofactor.

Its subcellular location is the cytoplasm. The enzyme catalyses cytidine(32) in tRNA + S-sulfanyl-L-cysteinyl-[cysteine desulfurase] + AH2 + ATP = 2-thiocytidine(32) in tRNA + L-cysteinyl-[cysteine desulfurase] + A + AMP + diphosphate + H(+). Its pathway is tRNA modification. Functionally, catalyzes the ATP-dependent 2-thiolation of cytidine in position 32 of tRNA, to form 2-thiocytidine (s(2)C32). The sulfur atoms are provided by the cysteine/cysteine desulfurase (IscS) system. The chain is tRNA-cytidine(32) 2-sulfurtransferase from Shigella boydii serotype 4 (strain Sb227).